The primary structure comprises 884 residues: Probable leucine-rich repeat receptor-like protein kinase At2g28990 (884 aa).

The first 19 residues, 1 to 19 (MKIHLLLAMIGTFVVIIGA), serve as a signal peptide directing secretion. Topologically, residues 20–508 (QDQEGFISLD…TEKKNKFLLP (489 aa)) are extracellular. Asparagine 70, asparagine 177, asparagine 217, asparagine 231, asparagine 251, asparagine 284, asparagine 298, asparagine 334, asparagine 418, asparagine 427, asparagine 438, asparagine 459, and asparagine 464 each carry an N-linked (GlcNAc...) asparagine glycan. 3 LRR repeats span residues 404–427 (SPTI…ILQN), 428–451 (FTQL…FLAN), and 452–476 (MKTL…LLDK). A helical membrane pass occupies residues 509 to 529 (VIASAASLVIVVVVVALFFVF). Topologically, residues 530-884 (RKKKASPSNL…IYNEVIPQAR (355 aa)) are cytoplasmic. The tract at residues 535–559 (SPSNLHAPPSMPVSNPGHNSQSESS) is disordered. Over residues 546 to 559 (PVSNPGHNSQSESS) the composition is skewed to polar residues. A Phosphothreonine modification is found at threonine 568. A Protein kinase domain is found at 577-850 (NNFDKALGEG…RVVNELKECL (274 aa)). ATP contacts are provided by residues 583–591 (LGEGGFGVV) and lysine 605. Tyrosine 650 carries the phosphotyrosine modification. The Proton acceptor role is filled by aspartate 702. Serine 736 carries the phosphoserine modification. 2 positions are modified to phosphothreonine: threonine 737 and threonine 742. Tyrosine 750 carries the phosphotyrosine modification.

It belongs to the protein kinase superfamily. Ser/Thr protein kinase family. Binds to the ammonium transporter AMT1-1.

It localises to the membrane. It catalyses the reaction L-seryl-[protein] + ATP = O-phospho-L-seryl-[protein] + ADP + H(+). The enzyme catalyses L-threonyl-[protein] + ATP = O-phospho-L-threonyl-[protein] + ADP + H(+). The chain is Probable leucine-rich repeat receptor-like protein kinase At2g28990 from Arabidopsis thaliana (Mouse-ear cress).